A 339-amino-acid polypeptide reads, in one-letter code: Annexin A2 (339 aa).

Residue Ser2 is modified to N-acetylserine. Residues 2-24 (STVHEILCKLSLEGDHSTPPSAY) are S100A10-binding site. A Phosphotyrosine; by SRC modification is found at Tyr24. Ser26 bears the Phosphoserine; by PKC mark. Annexin repeat units lie at residues 33–104 (FDAE…GLLK) and 105–176 (TPAQ…ALAK). The residue at position 49 (Lys49) is an N6-acetyllysine; alternate. Lys49 is covalently cross-linked (Glycyl lysine isopeptide (Lys-Gly) (interchain with G-Cter in SUMO1); alternate). Residue Lys49 forms a Glycyl lysine isopeptide (Lys-Gly) (interchain with G-Cter in SUMO2); alternate linkage. The residue at position 152 (Lys152) is an N6-acetyllysine. Ser184 carries the post-translational modification Phosphoserine. Annexin repeat units follow at residues 189–261 (ELID…NLVQ) and 265–336 (NKPL…YLCG). Tyr199 carries the phosphotyrosine modification. Position 227 is an N6-acetyllysine (Lys227).

This sequence belongs to the annexin family. Heterotetramer containing 2 light chains of S100A10/p11 and 2 heavy chains of ANXA2/p36. Interacts with ATP1B1. Interacts with DYSF. Interacts with COCH. Interacts (via repeat Annexin 1) with PCSK9 (via the C-terminal domain); the interaction inhibits the degradation of LDLR. Interacts with CEACAM1 (via the cytoplasmic domain); this interaction is regulated by phosphorylation of CEACAM1. Interacts with APPL2 and APPL1; targets APPL2 to endosomes and acting in parallel to RAB5A. Interacts with S100A4. May interact with UBAP2. Interacts with PLEKHG4B; this interaction is required for PLEKHG4B localization to cell-cell adhesions. As to quaternary structure, (Microbial infection) Interacts with human cytomegalovirus (HCMV). In terms of assembly, (Microbial infection) Interacts with M.pneumoniae CARDS toxin; CARDS probably uses this protein as a receptor. A portion of internalized CARDS remains associated with intracellular annexin 2. Post-translationally, phosphorylation of Tyr-24 enhances heat stress-induced translocation to the cell surface. In terms of processing, ISGylated.

Its subcellular location is the secreted. It localises to the extracellular space. The protein localises to the extracellular matrix. The protein resides in the basement membrane. It is found in the melanosome. Calcium-regulated membrane-binding protein whose affinity for calcium is greatly enhanced by anionic phospholipids. It binds two calcium ions with high affinity. May be involved in heat-stress response. Inhibits PCSK9-enhanced LDLR degradation, probably reduces PCSK9 protein levels via a translational mechanism but also competes with LDLR for binding with PCSK9. Binds to endosomes damaged by phagocytosis of particulate wear debris and participates in endosomal membrane stabilization, thereby limiting NLRP3 inflammasome activation. Required for endothelial cell surface plasmin generation and may support fibrinolytic surveillance and neoangiogenesis. Functionally, (Microbial infection) Binds M.pneumoniae CARDS toxin, probably serves as one receptor for this pathogen. When ANXA2 is down-regulated by siRNA, less toxin binds to human cells and less vacuolization (a symptom of M.pneumoniae infection) is seen. The polypeptide is Annexin A2 (ANXA2) (Homo sapiens (Human)).